A 910-amino-acid chain; its full sequence is SWI/SNF-related matrix-associated actin-dependent regulator of chromatin subfamily A-like protein 1 (910 aa).

Positions methionine 1–isoleucine 170 are disordered. Serine 2 carries the N-acetylserine modification. 2 mediates interaction with RPA2 regions span residues serine 2–alanine 30 and leucine 5–alanine 30. The stretch at leucine 3–leucine 28 forms a coiled coil. Residues glutamate 7 to tryptophan 29 are compositionally biased toward basic and acidic residues. Polar residues-rich tracts occupy residues glutamine 32–leucine 54 and serine 70–threonine 95. Residues glutamate 97–glycine 107 are compositionally biased toward basic and acidic residues. Serine 117 carries the phosphoserine modification. Polar residues predominate over residues glutamate 120–serine 131. Basic and acidic residues predominate over residues phenylalanine 150 to alanine 160. Serine 164 carries the post-translational modification Phosphoserine. HARP domains lie at lysine 198–glutamate 268 and serine 284–proline 355. The Helicase ATP-binding domain occupies serine 402 to threonine 557. Position 415–422 (aspartate 415–threonine 422) interacts with ATP. The DESH box signature appears at aspartate 506–histidine 509. The short motif at arginine 601–methionine 618 is the Nuclear localization signal element. The 154-residue stretch at tyrosine 672–alanine 825 folds into the Helicase C-terminal domain. Positions glycine 865 to serine 875 are enriched in low complexity. Positions glycine 865–serine 890 are disordered.

It belongs to the SNF2/RAD54 helicase family. SMARCAL1 subfamily. Interacts with RPA2; the interaction is direct and mediates the recruitment by the RPA complex of SMARCAL1 to sites of DNA damage. In terms of processing, DNA damage-regulated phosphorylation by kinases that may include ATM, ATR and PRKDC.

It localises to the nucleus. It carries out the reaction ATP + H2O = ADP + phosphate + H(+). Its function is as follows. ATP-dependent annealing helicase that binds selectively to fork DNA relative to ssDNA or dsDNA and catalyzes the rewinding of the stably unwound DNA. Rewinds single-stranded DNA bubbles that are stably bound by replication protein A (RPA). Acts throughout the genome to reanneal stably unwound DNA, performing the opposite reaction of many enzymes, such as helicases and polymerases, that unwind DNA. May play an important role in DNA damage response by acting at stalled replication forks. The sequence is that of SWI/SNF-related matrix-associated actin-dependent regulator of chromatin subfamily A-like protein 1 (Smarcal1) from Rattus norvegicus (Rat).